We begin with the raw amino-acid sequence, 124 residues long: Small ribosomal subunit protein uS12 (124 aa).

Position 89 is a 3-methylthioaspartic acid (Asp89).

This sequence belongs to the universal ribosomal protein uS12 family. In terms of assembly, part of the 30S ribosomal subunit. Contacts proteins S8 and S17. May interact with IF1 in the 30S initiation complex.

In terms of biological role, with S4 and S5 plays an important role in translational accuracy. Its function is as follows. Interacts with and stabilizes bases of the 16S rRNA that are involved in tRNA selection in the A site and with the mRNA backbone. Located at the interface of the 30S and 50S subunits, it traverses the body of the 30S subunit contacting proteins on the other side and probably holding the rRNA structure together. The combined cluster of proteins S8, S12 and S17 appears to hold together the shoulder and platform of the 30S subunit. This Acinetobacter baumannii (strain AB307-0294) protein is Small ribosomal subunit protein uS12.